Consider the following 490-residue polypeptide: Alpha-galactosidase (490 aa).

An NAD(+)-binding site is contributed by Phe-4–Asp-70. Position 150 (Asn-150) interacts with substrate. Position 171 (Cys-171) interacts with Mn(2+). His-172 serves as the catalytic Proton donor. His-201 is a Mn(2+) binding site. The Proton acceptor role is filled by Tyr-258.

The protein belongs to the glycosyl hydrolase 4 family. As to quaternary structure, homodimer. It depends on Mn(2+) as a cofactor. NAD(+) serves as cofactor.

The catalysed reaction is Hydrolysis of terminal, non-reducing alpha-D-galactose residues in alpha-D-galactosides, including galactose oligosaccharides, galactomannans and galactolipids.. This Rhizobium meliloti (strain 1021) (Ensifer meliloti) protein is Alpha-galactosidase (melA).